We begin with the raw amino-acid sequence, 76 residues long: Rhesus theta defensin-1/3 subunit A (76 aa).

The N-terminal stretch at 1 to 22 (MRTFALLTAMLLLVALHAQAEA) is a signal peptide. A propeptide spanning residues 23–64 (RQARADEAAAQQQPGTDDQGMAHSFTWPENAALPLSESAKGL) is cleaved from the precursor. Residues 25–45 (ARADEAAAQQQPGTDDQGMAH) form a disordered region. A Cyclopeptide (Arg-Cys) (interchain with C-73 in subunit A); in form RTD-3 cross-link involves residue Arg-65. Residue Arg-65 forms a Cyclopeptide (Arg-Cys) (interchain with C-73 in subunit B); in form RTD-1 linkage. A disulfide bridge links Cys-68 with Cys-73. Cys-73 participates in a covalent cross-link: Cyclopeptide (Cys-Arg) (interchain with R-65 in subunit A); in form RTD-3. Cys-73 is covalently cross-linked (Cyclopeptide (Cys-Arg) (interchain with R-65 in subunit B); in form RTD-1). Positions 74–76 (RLL) are excised as a propeptide.

Belongs to the alpha-defensin family. Theta subfamily. As to quaternary structure, RTD-1 is a cyclic heterodimer composed of subunits A and B; disulfide-linked. RTD-3 is a cyclic homodimer composed of two subunits A; disulfide-linked. Forms a cyclic peptide with subunit A (RTD-3) or with subunit B (RTD-1). An additional intersubunit disulfide bond is formed. As to expression, RTD-1 is expressed in bone marrow. Detected in promyelocytes, myelocytes and mature neutrophils and monocytes.

In terms of biological role, RTD-1 and RTD-3 have similar antimicrobial activities against the Gram-positive bacteria S.aureus 502A and L.monocytogenes, the Gram-negative bacteria S.typhimurium and E.coli ML35, and the fungi C.albicans 16820 and C.neoformans 271A. The polypeptide is Rhesus theta defensin-1/3 subunit A (RTD1A) (Macaca mulatta (Rhesus macaque)).